The sequence spans 383 residues: 3-dehydroquinate synthase (383 aa).

NAD(+) is bound by residues glutamate 81–lysine 86, glycine 115–aspartate 119, threonine 139–serine 140, lysine 152, and lysine 161. Positions 194, 256, and 274 each coordinate Zn(2+).

Belongs to the sugar phosphate cyclases superfamily. Dehydroquinate synthase family. It depends on Co(2+) as a cofactor. Zn(2+) is required as a cofactor. Requires NAD(+) as cofactor.

The protein localises to the cytoplasm. It carries out the reaction 7-phospho-2-dehydro-3-deoxy-D-arabino-heptonate = 3-dehydroquinate + phosphate. It functions in the pathway metabolic intermediate biosynthesis; chorismate biosynthesis; chorismate from D-erythrose 4-phosphate and phosphoenolpyruvate: step 2/7. Catalyzes the conversion of 3-deoxy-D-arabino-heptulosonate 7-phosphate (DAHP) to dehydroquinate (DHQ). In Nitrobacter winogradskyi (strain ATCC 25391 / DSM 10237 / CIP 104748 / NCIMB 11846 / Nb-255), this protein is 3-dehydroquinate synthase.